An 827-amino-acid chain; its full sequence is Cell surface glycoprotein (827 aa).

The first 34 residues, 1 to 34 (MTKLKDQTRAILLATLMVTSVFAGAIAFTGSAAA), serve as a signal peptide directing secretion. Asn-47 is a glycosylation site (N-linked (Glc...) asparagine). Over residues 73–102 (PLLTGTAGNSEGVSLDLSSPIPQTTENQPL) the composition is skewed to polar residues. Positions 73–111 (PLLTGTAGNSEGVSLDLSSPIPQTTENQPLGTYDVDGSG) are disordered. Asn-117, Asn-308, Asn-313, Asn-532, and Asn-766 each carry an N-linked (Glc...) asparagine glycan. Positions 755–804 (SEREDTTTSSDNATDTTTTTDGPTETTTTAEPTETTEEPTEETTTSSNTP) are disordered. Positions 761 to 787 (TTSSDNATDTTTTTDGPTETTTTAEPT) are enriched in low complexity. A PGF sorting signal motif is present at residues 804–806 (PGF). The chain crosses the membrane as a helical span at residues 804–823 (PGFGIAVALVALVGAALLAL).

This sequence belongs to the halobacterial S-layer protein family. Post-translationally, O-glycosylated on 4 to 6 threonine residues; glycans consist of Glc-Gal disaccharides. In terms of processing, the N-terminus is not blocked. Cleaved by the archaeosortase ArtA at the C-terminus, with removal of a short hydrophobic segment. Post-translationally, lipidation: Following protein translocation across the membrane, the protein is modified by a derivative of mevalonic acid. Lipid modification is ArtA-dependent and requires the conserved C-terminal PGF motif. In terms of processing, asn-47 and Asn-117 are glycosylated by a pentasaccharide comprising a hexose, 2 hexuronic acids, a methyl ester of a hexuronic acid and mannose. The pentasaccharide is produced in 2 steps: first, a tetrasaccharide is built on dolichol-P and then transferred to the S-layer glycoprotein. Then, the mannose fifth sugar is attached to a distinct molecule of dolichol-P and is transferred to the protein already carrying the tetrasaccharide. The pentasaccharide on Asn-47 was initially thought to contain mannose, galactose, glucose and idose with a relative ratio of 1/3/3/0.2. However, it was later shown that it is not the case. Under low-salt conditions (1.75 M instead of 3.4 M), a tetrasaccharide consisting of a sulfated hexose, 2 hexoses and rhamnose is attached to Asn-532.

The protein resides in the secreted. The protein localises to the cell wall. It is found in the S-layer. Its subcellular location is the cell membrane. S-layer protein. The S-layer is a paracrystalline mono-layered assembly of proteins which coat the surface of the cell. This chain is Cell surface glycoprotein (csg), found in Haloferax volcanii (strain ATCC 29605 / DSM 3757 / JCM 8879 / NBRC 14742 / NCIMB 2012 / VKM B-1768 / DS2) (Halobacterium volcanii).